A 229-amino-acid chain; its full sequence is Uridylate kinase (229 aa).

11 to 12 (GS) is a binding site for ATP. A UMP-binding site is contributed by Gly45. Gly46 and Arg50 together coordinate ATP. UMP is bound by residues Asp67 and 114–120 (TEPGHTT). Thr140, Tyr146, and Asp149 together coordinate ATP.

Belongs to the UMP kinase family. In terms of assembly, homohexamer.

The protein resides in the cytoplasm. It carries out the reaction UMP + ATP = UDP + ADP. It participates in pyrimidine metabolism; CTP biosynthesis via de novo pathway; UDP from UMP (UMPK route): step 1/1. With respect to regulation, inhibited by UTP. Catalyzes the reversible phosphorylation of UMP to UDP. In Thermoplasma acidophilum (strain ATCC 25905 / DSM 1728 / JCM 9062 / NBRC 15155 / AMRC-C165), this protein is Uridylate kinase.